The sequence spans 239 residues: Exosome complex component Rrp4 (239 aa).

Positions 67–139 (GDFVVGIVEE…PVQRVELSLL (73 aa)) constitute an S1 motif domain. Positions 151–217 (QGGQVVEIDP…LAVRAIREIE (67 aa)) constitute a KH domain.

This sequence belongs to the RRP4 family. Component of the archaeal exosome complex. Forms a trimer of Rrp4 and/or Csl4 subunits. The trimer associates with a hexameric ring-like arrangement composed of 3 Rrp41-Rrp42 heterodimers.

The protein localises to the cytoplasm. Its function is as follows. Non-catalytic component of the exosome, which is a complex involved in RNA degradation. Increases the RNA binding and the efficiency of RNA degradation. Confers strong poly(A) specificity to the exosome. This Methanopyrus kandleri (strain AV19 / DSM 6324 / JCM 9639 / NBRC 100938) protein is Exosome complex component Rrp4.